The chain runs to 467 residues: Glutamate--tRNA ligase (467 aa).

The 'HIGH' region signature appears at 9-19; it reads PSPTGYLHIGG. The 'KMSKS' region signature appears at 237-241; that stretch reads KLSKR. Lys-240 lines the ATP pocket.

Belongs to the class-I aminoacyl-tRNA synthetase family. Glutamate--tRNA ligase type 1 subfamily. Monomer.

It localises to the cytoplasm. The catalysed reaction is tRNA(Glu) + L-glutamate + ATP = L-glutamyl-tRNA(Glu) + AMP + diphosphate. Its function is as follows. Catalyzes the attachment of glutamate to tRNA(Glu) in a two-step reaction: glutamate is first activated by ATP to form Glu-AMP and then transferred to the acceptor end of tRNA(Glu). This is Glutamate--tRNA ligase from Xylella fastidiosa (strain 9a5c).